The primary structure comprises 518 residues: Glutamate--cysteine ligase (518 aa).

Belongs to the glutamate--cysteine ligase type 1 family. Type 1 subfamily.

It catalyses the reaction L-cysteine + L-glutamate + ATP = gamma-L-glutamyl-L-cysteine + ADP + phosphate + H(+). It functions in the pathway sulfur metabolism; glutathione biosynthesis; glutathione from L-cysteine and L-glutamate: step 1/2. This Escherichia coli O8 (strain IAI1) protein is Glutamate--cysteine ligase.